A 232-amino-acid chain; its full sequence is Ubiquinone biosynthesis O-methyltransferase (232 aa).

Positions 36, 55, 76, and 120 each coordinate S-adenosyl-L-methionine.

This sequence belongs to the methyltransferase superfamily. UbiG/COQ3 family.

It carries out the reaction a 3-demethylubiquinol + S-adenosyl-L-methionine = a ubiquinol + S-adenosyl-L-homocysteine + H(+). The enzyme catalyses a 3-(all-trans-polyprenyl)benzene-1,2-diol + S-adenosyl-L-methionine = a 2-methoxy-6-(all-trans-polyprenyl)phenol + S-adenosyl-L-homocysteine + H(+). The protein operates within cofactor biosynthesis; ubiquinone biosynthesis. In terms of biological role, O-methyltransferase that catalyzes the 2 O-methylation steps in the ubiquinone biosynthetic pathway. This chain is Ubiquinone biosynthesis O-methyltransferase, found in Burkholderia mallei (strain ATCC 23344).